A 153-amino-acid chain; its full sequence is Sperm surface protein Sp17 (153 aa).

The segment at 74 to 117 (FKVPSGATESKEAPPEKSEPEKETPQEVVKEQETQVSFVEEVST) is disordered. Positions 82-106 (ESKEAPPEKSEPEKETPQEVVKEQE) are enriched in basic and acidic residues. Positions 122-151 (AAAAAVKIQAAFRGHKARKEVKIMKESSIE) constitute an IQ domain.

Homodimer. May interact with ROPN1. Testis- and sperm-specific.

It localises to the membrane. Sperm surface zona pellucida binding protein. Helps to bind spermatozoa to the zona pellucida with high affinity. Might function in binding zona pellucida and carbohydrates. The polypeptide is Sperm surface protein Sp17 (SPA17) (Notamacropus eugenii (Tammar wallaby)).